The sequence spans 163 residues: Lipoprotein signal peptidase (163 aa).

Helical transmembrane passes span 5-25, 37-57, 67-87, and 91-111; these read VLTF…TKSL, IIPG…FGML, LMLV…VFKS, and LSNL…GNLY. Active-site residues include Asp121 and Asp139. Residues 132-152 form a helical membrane-spanning segment; it reads WPAFNVADASITIGIALFIGY.

The protein belongs to the peptidase A8 family.

The protein resides in the cell inner membrane. It carries out the reaction Release of signal peptides from bacterial membrane prolipoproteins. Hydrolyzes -Xaa-Yaa-Zaa-|-(S,diacylglyceryl)Cys-, in which Xaa is hydrophobic (preferably Leu), and Yaa (Ala or Ser) and Zaa (Gly or Ala) have small, neutral side chains.. It functions in the pathway protein modification; lipoprotein biosynthesis (signal peptide cleavage). This protein specifically catalyzes the removal of signal peptides from prolipoproteins. The sequence is that of Lipoprotein signal peptidase from Sulfurihydrogenibium sp. (strain YO3AOP1).